The chain runs to 437 residues: Phosphomethylpyrimidine synthase (437 aa).

Residues Asn-69, Met-98, Tyr-127, His-163, Ser-185–Gly-187, Asp-226–Arg-229, and Glu-265 each bind substrate. Residue His-269 coordinates Zn(2+). Tyr-292 lines the substrate pocket. His-333 lines the Zn(2+) pocket. Residues Cys-409, Cys-412, and Cys-416 each contribute to the [4Fe-4S] cluster site.

The protein belongs to the ThiC family. Requires [4Fe-4S] cluster as cofactor.

It carries out the reaction 5-amino-1-(5-phospho-beta-D-ribosyl)imidazole + S-adenosyl-L-methionine = 4-amino-2-methyl-5-(phosphooxymethyl)pyrimidine + CO + 5'-deoxyadenosine + formate + L-methionine + 3 H(+). It participates in cofactor biosynthesis; thiamine diphosphate biosynthesis. Functionally, catalyzes the synthesis of the hydroxymethylpyrimidine phosphate (HMP-P) moiety of thiamine from aminoimidazole ribotide (AIR) in a radical S-adenosyl-L-methionine (SAM)-dependent reaction. The chain is Phosphomethylpyrimidine synthase from Clostridium botulinum (strain Okra / Type B1).